A 24-amino-acid chain; its full sequence is Brevinin-1Sb (24 aa).

A disulfide bridge links Cys-18 with Cys-24.

As to expression, expressed by the skin glands.

The protein resides in the secreted. Functionally, antibacterial activity against Gram-negative bacterium E.coli. This is Brevinin-1Sb from Lithobates sphenocephalus (Southern leopard frog).